The primary structure comprises 101 residues: Small ribosomal subunit protein uS14 (101 aa).

A compositionally biased stretch (basic and acidic residues) spans 1-10 (MAKKSSIEKN). Positions 1–23 (MAKKSSIEKNNRRRKMTKNAAPK) are disordered. The segment covering 11 to 23 (NRRRKMTKNAAPK) has biased composition (basic residues).

It belongs to the universal ribosomal protein uS14 family. In terms of assembly, part of the 30S ribosomal subunit. Contacts proteins S3 and S10.

Its function is as follows. Binds 16S rRNA, required for the assembly of 30S particles and may also be responsible for determining the conformation of the 16S rRNA at the A site. In Rhodopseudomonas palustris (strain BisB5), this protein is Small ribosomal subunit protein uS14.